Reading from the N-terminus, the 121-residue chain is VGVFLLSYSVPSCGRSVEELGRRLKRAVSEHQLLHDKGKSIQDLRRRFFLHHLIAEIHTAEIRATSEVSPNSKPAPNTKNHPVRFGSDDEGKYLTQETNKVETYKEQPLKTPGKKKKGKPG.

The signal sequence occupies residues 1–14 (VGVFLLSYSVPSCG). Residues 15 to 24 (RSVEELGRRL) constitute a propeptide that is removed on maturation. The tract at residues 47–58 (RFFLHHLIAEIH) is important for receptor binding. A disordered region spans residues 61 to 121 (EIRATSEVSP…PGKKKKGKPG (61 aa)). Polar residues predominate over residues 66–80 (SEVSPNSKPAPNTKN). The short motif at 98 to 119 (TNKVETYKEQPLKTPGKKKKGK) is the Nuclear localization signal element. Positions 99 to 108 (NKVETYKEQP) are enriched in basic and acidic residues. Over residues 112–121 (PGKKKKGKPG) the composition is skewed to basic residues.

This sequence belongs to the parathyroid hormone family. As to quaternary structure, PTHrP interacts with PTH1R (via N-terminal extracellular domain).

The protein localises to the secreted. Its subcellular location is the cytoplasm. The protein resides in the nucleus. Neuroendocrine peptide which is a critical regulator of cellular and organ growth, development, migration, differentiation and survival and of epithelial calcium ion transport. Acts by binding to its receptor, PTH1R, activating G protein-coupled receptor signaling. Regulates endochondral bone development and epithelial-mesenchymal interactions during the formation of the mammary glands and teeth. Required for skeletal homeostasis. Promotes mammary mesenchyme differentiation and bud outgrowth by modulating mesenchymal cell responsiveness to BMPs. Up-regulates BMPR1A expression in the mammary mesenchyme and this increases the sensitivity of these cells to BMPs and allows them to respond to BMP4 in a paracrine and/or autocrine fashion. BMP4 signaling in the mesenchyme, in turn, triggers epithelial outgrowth and augments MSX2 expression, which causes the mammary mesenchyme to inhibit hair follicle formation within the nipple sheath. The sequence is that of Parathyroid hormone-related protein (PTHLH) from Ovis aries (Sheep).